Reading from the N-terminus, the 363-residue chain is L-serine dehydratase/L-threonine deaminase (363 aa).

A2 bears the N-acetylalanine mark. The residue at position 41 (K41) is an N6-(pyridoxal phosphate)lysine. Positions 74–98 (RGRSHSGDEQPHVRSQALLPDTPSP) are disordered. Residue P164 coordinates pyridoxal 5'-phosphate.

The protein belongs to the serine/threonine dehydratase family. Homodimer. Pyridoxal 5'-phosphate serves as cofactor. In terms of tissue distribution, predominantly expressed in the periportal regions of the liver.

Its subcellular location is the cytoplasm. The enzyme catalyses L-serine = pyruvate + NH4(+). It catalyses the reaction L-threonine = 2-oxobutanoate + NH4(+). Its pathway is carbohydrate biosynthesis; gluconeogenesis. Catalyzes the pyridoxal-phosphate-dependent dehydrative deamination of L-threonine and L-serine to ammonia and alpha-ketobutyrate and pyruvate, respectively. This is L-serine dehydratase/L-threonine deaminase (Sds) from Rattus norvegicus (Rat).